We begin with the raw amino-acid sequence, 467 residues long: RuvB-like helicase 2 (467 aa).

73–80 (GPPSTGKT) provides a ligand contact to ATP.

It belongs to the RuvB family. In terms of assembly, may form heterododecamers with RVB1. Component of the SWR1 chromatin remodeling complex, the INO80 chromatin remodeling complex, and of the R2TP complex.

The protein localises to the nucleus. It catalyses the reaction ATP + H2O = ADP + phosphate + H(+). Its function is as follows. DNA helicase which participates in several chromatin remodeling complexes, including the SWR1 and the INO80 complexes. The SWR1 complex mediates the ATP-dependent exchange of histone H2A for the H2A variant HZT1 leading to transcriptional regulation of selected genes by chromatin remodeling. The INO80 complex remodels chromatin by shifting nucleosomes and is involved in DNA repair. Also involved in pre-rRNA processing. The chain is RuvB-like helicase 2 (RVB2) from Kluyveromyces lactis (strain ATCC 8585 / CBS 2359 / DSM 70799 / NBRC 1267 / NRRL Y-1140 / WM37) (Yeast).